A 202-amino-acid polypeptide reads, in one-letter code: Superoxide dismutase [Fe] (202 aa).

His-30, His-78, Asp-164, and His-168 together coordinate Fe cation.

Belongs to the iron/manganese superoxide dismutase family. As to quaternary structure, homotetramer. Fe cation serves as cofactor.

The enzyme catalyses 2 superoxide + 2 H(+) = H2O2 + O2. Functionally, destroys superoxide anion radicals which are normally produced within the cells and which are toxic to biological systems. The sequence is that of Superoxide dismutase [Fe] (sod) from Methanothermobacter marburgensis (strain ATCC BAA-927 / DSM 2133 / JCM 14651 / NBRC 100331 / OCM 82 / Marburg) (Methanobacterium thermoautotrophicum).